The sequence spans 1273 residues: DNA gyrase subunit A (1273 aa).

Positions 42–931 constitute a Topo IIA-type catalytic domain; the sequence is LPEVRDGLKP…VDGDVNDEDL (890 aa). Residue Tyr-130 is the O-(5'-phospho-DNA)-tyrosine intermediate of the active site. Residues 256 to 396 enclose the DOD-type homing endonuclease domain; the sequence is LFGAFISGGF…VQQMLLEFGV (141 aa). The short motif at 958 to 964 is the GyrA-box element; that stretch reads QKRGGKG.

It belongs to the type II topoisomerase GyrA/ParC subunit family. Heterotetramer, composed of two GyrA and two GyrB chains. In the heterotetramer, GyrA contains the active site tyrosine that forms a transient covalent intermediate with the DNA, while GyrB binds cofactors catalyzes ATP hydrolysis. In terms of processing, this protein undergoes a protein self splicing that involves a post-translational excision of the intervening region (intein) followed by peptide ligation.

The protein resides in the cytoplasm. The enzyme catalyses ATP-dependent breakage, passage and rejoining of double-stranded DNA.. Its activity is regulated as follows. DNA supercoiling is inhibited by fluoroquinolones; IC(50) 1 ug/ml for sitafloxacin. Its function is as follows. A type II topoisomerase that negatively supercoils closed circular double-stranded (ds) DNA in an ATP-dependent manner to modulate DNA topology and maintain chromosomes in an underwound state. Negative supercoiling favors strand separation, and DNA replication, transcription, recombination and repair, all of which involve strand separation. Also able to catalyze the interconversion of other topological isomers of dsDNA rings, including catenanes and knotted rings. Type II topoisomerases break and join 2 DNA strands simultaneously in an ATP-dependent manner. The sequence is that of DNA gyrase subunit A from Mycobacterium leprae (strain TN).